Reading from the N-terminus, the 160-residue chain is Putative 4-hydroxy-4-methyl-2-oxoglutarate aldolase (160 aa).

Substrate contacts are provided by residues 78-81 (GDVI) and arginine 100. Aspartate 101 serves as a coordination point for a divalent metal cation.

The protein belongs to the class II aldolase/RraA-like family. Homotrimer. The cofactor is a divalent metal cation.

It carries out the reaction 4-hydroxy-4-methyl-2-oxoglutarate = 2 pyruvate. The enzyme catalyses oxaloacetate + H(+) = pyruvate + CO2. Catalyzes the aldol cleavage of 4-hydroxy-4-methyl-2-oxoglutarate (HMG) into 2 molecules of pyruvate. Also contains a secondary oxaloacetate (OAA) decarboxylase activity due to the common pyruvate enolate transition state formed following C-C bond cleavage in the retro-aldol and decarboxylation reactions. The polypeptide is Putative 4-hydroxy-4-methyl-2-oxoglutarate aldolase (Mycolicibacterium paratuberculosis (strain ATCC BAA-968 / K-10) (Mycobacterium paratuberculosis)).